The primary structure comprises 239 residues: MDKKLHFVSPETGPNSNLDLTPQLAQSSSAFLFEPKNIVPFETALGWQKNFQKNLIEQPFSPQAVWLLEHFSCFTMGRGSDKKNLLFEENNSPLPVFSIERGGEVTHHMPGQIVGYLVLNLSLHKKDLSWYLRELEQVLIDVLDLLGMEGKRVDGLTGVWCEDKKVGSIGIGCKRWVTQHGFSLNVDCDLIGFEKIIPCGLDKVKVGKLSDWIPGIKVCDVTPLLRESVKRRFKLNWEK.

A BPL/LPL catalytic domain is found at 59–239 (PFSPQAVWLL…KRRFKLNWEK (181 aa)). Substrate is bound by residues 101–108 (RGGEVTHH), 168–170 (SIG), and 181–183 (GFS). The active-site Acyl-thioester intermediate is C199.

The protein belongs to the LipB family.

Its subcellular location is the cytoplasm. The catalysed reaction is octanoyl-[ACP] + L-lysyl-[protein] = N(6)-octanoyl-L-lysyl-[protein] + holo-[ACP] + H(+). Its pathway is protein modification; protein lipoylation via endogenous pathway; protein N(6)-(lipoyl)lysine from octanoyl-[acyl-carrier-protein]: step 1/2. In terms of biological role, catalyzes the transfer of endogenously produced octanoic acid from octanoyl-acyl-carrier-protein onto the lipoyl domains of lipoate-dependent enzymes. Lipoyl-ACP can also act as a substrate although octanoyl-ACP is likely to be the physiological substrate. This chain is Octanoyltransferase, found in Prochlorococcus marinus (strain NATL2A).